We begin with the raw amino-acid sequence, 266 residues long: Translation initiation factor 2 subunit alpha (266 aa).

Residues 12 to 83 enclose the S1 motif domain; that stretch reads GDIVIGTVKD…RKGHIDLSLK (72 aa).

It belongs to the eIF-2-alpha family. As to quaternary structure, heterotrimer composed of an alpha, a beta and a gamma chain.

Its function is as follows. eIF-2 functions in the early steps of protein synthesis by forming a ternary complex with GTP and initiator tRNA. The polypeptide is Translation initiation factor 2 subunit alpha (eif2a) (Methanocaldococcus jannaschii (strain ATCC 43067 / DSM 2661 / JAL-1 / JCM 10045 / NBRC 100440) (Methanococcus jannaschii)).